The chain runs to 725 residues: mRNA decay activator protein ZFP36L3 (725 aa).

A compositionally biased stretch (low complexity) spans 1-25 (MANNNLNRPLNTNVADSSNSSSTPG). A disordered region spans residues 1-119 (MANNNLNRPL…KVSGSSSLAT (119 aa)). Composition is skewed to polar residues over residues 42–72 (APSS…QSGA) and 100–119 (HSLQ…SLAT). 2 consecutive C3H1-type zinc fingers follow at residues 122–150 (RYKT…HGYR) and 160–188 (KYKT…HNQP). The tract at residues 193–711 (VLSESTLEEP…ESEFDNTNSS (519 aa)) is necessary for cytoplasmic localization. Positions 276 to 310 (STTAHDADKDPDKDADKDPSNNSANDALAFPQEPG) are disordered. Residues 280 to 294 (HDADKDPDKDADKDP) show a composition bias toward basic and acidic residues. 4 consecutive transmembrane segments (helical) span residues 380-400 (LAPA…AMAL), 420-440 (AALA…GAAM), 441-461 (APGA…MATG), and 468-488 (AAMA…GAAV). A disordered region spans residues 686–709 (DEDDFLRRSSSSSSLNESEFDNTN). The segment covering 693–702 (RSSSSSSLNE) has biased composition (low complexity).

Expressed in placenta and extraembryonic tissues (at protein level). Not detected in embryos and fetus.

The protein localises to the cytoplasm. It is found in the membrane. Placenta-specific zinc-finger RNA-binding protein that destabilizes cytoplasmic AU-rich element (ARE)-containing mRNA transcripts by promoting their poly(A) tail removal or deadenylation, and hence provide a mechanism for attenuating protein synthesis. Binds to the 3'-UTR ARE of placental target mRNAs, such as TNF, HBEGF and LIPG. Involved in placental expression of many genes important for normal placental physiology. The chain is mRNA decay activator protein ZFP36L3 from Mus musculus (Mouse).